The following is an 81-amino-acid chain: Costars family protein ABRACL (81 aa).

This sequence belongs to the costars family.

The protein is Costars family protein ABRACL of Salmo salar (Atlantic salmon).